Here is a 129-residue protein sequence, read N- to C-terminus: Small ribosomal subunit protein uS11 (129 aa).

Belongs to the universal ribosomal protein uS11 family. In terms of assembly, part of the 30S ribosomal subunit. Interacts with proteins S7 and S18. Binds to IF-3.

Its function is as follows. Located on the platform of the 30S subunit, it bridges several disparate RNA helices of the 16S rRNA. Forms part of the Shine-Dalgarno cleft in the 70S ribosome. The chain is Small ribosomal subunit protein uS11 from Bradyrhizobium sp. (strain ORS 278).